A 148-amino-acid chain; its full sequence is Snaclec B9 (148 aa).

An N-terminal signal peptide occupies residues 1-24; the sequence is MGRFIFVSFGLLVVFLSLSGTGAA. Cystine bridges form between Cys27–Cys38, Cys55–Cys144, and Cys121–Cys136. The C-type lectin domain occupies 34–145; that stretch reads YDQHCYKVFD…CRLLGHFVCK (112 aa). N-linked (GlcNAc...) asparagine glycosylation is found at Asn57 and Asn60.

Belongs to the snaclec family. Heterodimer; disulfide-linked. As to expression, expressed by the venom gland.

It localises to the secreted. Functionally, interferes with one step of hemostasis (modulation of platelet aggregation, or coagulation cascade, for example). The chain is Snaclec B9 from Macrovipera lebetinus (Levantine viper).